A 192-amino-acid chain; its full sequence is Casparian strip membrane protein 1 (192 aa).

Topologically, residues 1–30 (MSTTVDVPESSNVAKGKAIAVARPGGWKKG) are cytoplasmic. The helical transmembrane segment at 31–51 (LAIMDFILRLGGIAASLGAAA) threads the bilayer. Residues 52-80 (TMGTSDQTLPFFTQFFQFEASYDSFTTFQ) are Extracellular-facing. A helical transmembrane segment spans residues 81 to 101 (FFVITMALVAGYLVLSLPFSV). The Cytoplasmic portion of the chain corresponds to 102 to 113 (VAIIRPHAPGPR). A helical transmembrane segment spans residues 114–134 (LFLIILDTVFLTLATASGASA). Residues 135–166 (AAIVYLAHNGNQDSNWLAICNQFGDFCAQTSG) are Extracellular-facing. Residues 167–187 (AVVASFVAVVILVLLVIMSAL) traverse the membrane as a helical segment. Residues 188–192 (ALRRH) lie on the Cytoplasmic side of the membrane.

This sequence belongs to the Casparian strip membrane proteins (CASP) family. As to quaternary structure, homodimer and heterodimers.

The protein resides in the cell membrane. Regulates membrane-cell wall junctions and localized cell wall deposition. Required for establishment of the Casparian strip membrane domain (CSD) and the subsequent formation of Casparian strips, a cell wall modification of the root endodermis that determines an apoplastic barrier between the intraorganismal apoplasm and the extraorganismal apoplasm and prevents lateral diffusion. This Vigna unguiculata (Cowpea) protein is Casparian strip membrane protein 1.